A 541-amino-acid chain; its full sequence is Cytochrome bc1 complex cytochrome b subunit (541 aa).

Residues Phe36–Leu56 form a helical membrane-spanning segment. Residues His105 and His119 each coordinate heme. 3 consecutive transmembrane segments (helical) span residues Ala109–Phe129, Trp137–Leu157, and Ile169–Phe189. Heme-binding residues include His206 and His221. The next 5 helical transmembrane spans lie at Val207–Tyr227, Ser256–Ile276, Val325–Ile345, Leu371–Trp391, and Ile408–Leu428.

This sequence belongs to the cytochrome b family. As to quaternary structure, the cytochrome bc1 complex is composed of a cytochrome b (QcrB), the Rieske protein iron-sulfur (QcrA) and a diheme cytochrome c (QcrC) subunit. Heme is required as a cofactor.

It is found in the cell membrane. The enzyme catalyses a quinol + 2 Fe(III)-[cytochrome c](out) = a quinone + 2 Fe(II)-[cytochrome c](out) + 2 H(+)(out). Cytochrome b subunit of the cytochrome bc1 complex, an essential component of the respiratory electron transport chain required for ATP synthesis. The bc1 complex catalyzes the oxidation of menaquinol and the reduction of cytochrome c in the respiratory chain. The bc1 complex operates through a Q-cycle mechanism that couples electron transfer to generation of the proton gradient that drives ATP synthesis. The protein is Cytochrome bc1 complex cytochrome b subunit (qcrB) of Corynebacterium efficiens (strain DSM 44549 / YS-314 / AJ 12310 / JCM 11189 / NBRC 100395).